The following is a 312-amino-acid chain: Very long chain fatty acid elongase 4 (312 aa).

N20 carries N-linked (GlcNAc...) asparagine glycosylation. A run of 7 helical transmembrane segments spans residues 42 to 62 (LMQS…FVWL), 78 to 98 (VLII…RELF), 127 to 147 (ALWW…FFIL), 165 to 185 (MFTL…FFGA), 188 to 208 (NSFI…GPWI), 217 to 237 (YLTM…ALSL), and 246 to 266 (WMHW…LNFY). A compositionally biased stretch (polar residues) spans 273-292 (PKQSKTGKTATNGISSNGVN). The interval 273–312 (PKQSKTGKTATNGISSNGVNKSEKALENGKPQKNGKPKGE) is disordered. N-linked (GlcNAc...) asparagine glycosylation is present at N292. The Di-lysine motif motif lies at 308–312 (KPKGE).

It belongs to the ELO family. ELOVL4 subfamily. As to quaternary structure, oligomer. Post-translationally, N-glycosylated. As to expression, expressed in the retina, exclusively in photoreceptor cells and in the brain, skin, testis and lens.

The protein localises to the endoplasmic reticulum membrane. The enzyme catalyses a very-long-chain acyl-CoA + malonyl-CoA + H(+) = a very-long-chain 3-oxoacyl-CoA + CO2 + CoA. The catalysed reaction is hexacosanoyl-CoA + malonyl-CoA + H(+) = 3-oxooctacosanyol-CoA + CO2 + CoA. It carries out the reaction octacosanoyl-CoA + malonyl-CoA + H(+) = 3-oxo-triacontanoyl-CoA + CO2 + CoA. It catalyses the reaction triacontanoyl-CoA + malonyl-CoA + H(+) = 3-oxo-dotriacontanoyl-CoA + CO2 + CoA. The enzyme catalyses (19Z,22Z,25Z,28Z,31Z)-tetratriacontapentaenoyl-CoA + malonyl-CoA + H(+) = 3-oxo-(21Z,24Z,27Z,30Z,33Z)-hexatriacontapentaenoyl-CoA + CO2 + CoA. The catalysed reaction is (4Z,7Z,10Z,13Z,16Z,19Z)-docosahexaenoyl-CoA + malonyl-CoA + H(+) = 3-oxo-(6Z,9Z,12Z,15Z,18Z,21Z)-tetracosahexaenoyl-CoA + CO2 + CoA. It carries out the reaction (7Z,10Z,13Z,16Z)-docosatetraenoyl-CoA + malonyl-CoA + H(+) = (9Z,12Z,15Z,18Z)-3-oxotetracosatetraenoyl-CoA + CO2 + CoA. It catalyses the reaction (11Z,14Z,17Z,20Z,23Z)-hexacosapentaenoyl-CoA + malonyl-CoA + H(+) = 3-oxo-(13Z,16Z,19Z,22Z,25Z)-octacosapentaenoyl-CoA + CO2 + CoA. The enzyme catalyses (13Z,16Z,19Z,22Z,25Z)-octacosapentaenoyl-CoA + malonyl-CoA + H(+) = 3-oxo-(15Z,18Z,21Z,24Z,27Z)-triacontapentaenoyl-CoA + CO2 + CoA. The catalysed reaction is (15Z,18Z,21Z,24Z,27Z)-triacontapentaenoyl-CoA + malonyl-CoA + H(+) = 3-oxo-(17Z,20Z,23Z,26Z,29Z)-dotriacontapentaenoyl-CoA + CO2 + CoA. It carries out the reaction (17Z,20Z,23Z,26Z,29Z)-dotriacontapentaenoyl-CoA + malonyl-CoA + H(+) = 3-oxo-(19Z,22Z,25Z,28Z,31Z)-tetratriacontapentaenoyl-CoA + CO2 + CoA. It catalyses the reaction (21Z,24Z,27Z,30Z,33Z)-hexatriacontapentaenoyl-CoA + malonyl-CoA + H(+) = 3-oxo-(23Z,26Z,29Z,32Z,35Z)-octatriacontapentaenoyl-CoA + CO2 + CoA. The enzyme catalyses (11Z,14Z,17Z,20Z)-hexacosatetraenoyl-CoA + malonyl-CoA + H(+) = (13Z,16Z,19Z,22Z)-3-oxooctacosatetraenoyl-CoA + CO2 + CoA. The catalysed reaction is (13Z,16Z,19Z,22Z)-octacosatetraenoyl-CoA + malonyl-CoA + H(+) = 3-oxo-(15Z,18Z,21Z,24Z)-triacontatetraenoyl-CoA + CO2 + CoA. It carries out the reaction (15Z,18Z,21Z,24Z)-triacontatetraenoyl-CoA + malonyl-CoA + H(+) = 3-oxo-(17Z,20Z,23Z,26Z)-dotriacontatetraenoyl-CoA + CO2 + CoA. It catalyses the reaction (17Z,20Z,23Z,26Z)-dotriacontatetraenoyl-CoA + malonyl-CoA + H(+) = 3-oxo-(19Z,22Z,25Z,28Z)-tetratriacontatetraenoyl-CoA + CO2 + CoA. The enzyme catalyses (19Z,22Z,25Z,28Z)-tetratriacontatetraenoyl-CoA + malonyl-CoA + H(+) = 3-oxo-(21Z,24Z,27Z,30Z)-hexatriacontatetraenoyl-CoA + CO2 + CoA. The catalysed reaction is (21Z,24Z,27Z,30Z)-hexatriacontatetraenoyl-CoA + malonyl-CoA + H(+) = 3-oxo-(23Z,26Z,29Z,32Z)-octatriacontatetraenoyl-CoA + CO2 + CoA. It carries out the reaction (6Z,9Z,12Z,15Z,18Z,21Z)-tetracosahexaenoyl-CoA + malonyl-CoA + H(+) = 3-oxo-(8Z,11Z,14Z,17Z,20Z,23Z)-hexacosahexaenoyl-CoA + CO2 + CoA. It catalyses the reaction (8Z,11Z,14Z,17Z,20Z,23Z)-hexacosahexaenoyl-CoA + malonyl-CoA + H(+) = 3-oxo-(10Z,13Z,16Z,19Z,22Z,25Z)-octacosahexaenoyl-CoA + CO2 + CoA. The enzyme catalyses (10Z,13Z,16Z,19Z,22Z,25Z)-octacosahexaenoyl-CoA + malonyl-CoA + H(+) = 3-oxo-(12Z,15Z,18Z,21Z,24Z,27Z)-triacontahexaenoyl-CoA + CO2 + CoA. The catalysed reaction is (12Z,15Z,18Z,21Z,24Z,27Z)-triacontahexaenoyl-CoA + malonyl-CoA + H(+) = 3-oxo-(14Z,17Z,20Z,23Z,26Z,29Z)-dotriacontahexaenoyl-CoA + CO2 + CoA. It carries out the reaction (14Z,17Z,20Z,23Z,26Z,29Z)-dotriacontahexaenoyl-CoA + malonyl-CoA + H(+) = 3-oxo-(16Z,19Z,22Z,25Z,28Z,31Z)-tetratriacontahexaenoyl-CoA + CO2 + CoA. It catalyses the reaction (16Z,19Z,22Z,25Z,28Z,31Z)-tetratriacontahexaenoyl-CoA + malonyl-CoA + H(+) = 3-oxo-(18Z,21Z,24Z,27Z,30Z,33Z)-hexatriacontahexaenoyl-CoA + CO2 + CoA. The enzyme catalyses (9Z,12Z,15Z,18Z,21Z)-tetracosapentaenoyl-CoA + malonyl-CoA + H(+) = 3-oxo-(11Z,14Z,17Z,20Z,23Z)-hexacosapentaenoyl-CoA + CO2 + CoA. It participates in lipid metabolism; fatty acid biosynthesis. Its function is as follows. Catalyzes the first and rate-limiting reaction of the four reactions that constitute the long-chain fatty acids elongation cycle. This endoplasmic reticulum-bound enzymatic process allows the addition of 2 carbons to the chain of long- and very long-chain fatty acids (VLCFAs) per cycle. Condensing enzyme that catalyzes the synthesis of very long chain saturated (VLC-SFA) and polyunsaturated (PUFA) fatty acids that are involved in multiple biological processes as precursors of membrane lipids and lipid mediators. May play a critical role in early brain and skin development. In Mus musculus (Mouse), this protein is Very long chain fatty acid elongase 4.